Here is a 909-residue protein sequence, read N- to C-terminus: Phosphoenolpyruvate carboxylase (909 aa).

Residues histidine 138 and lysine 572 contribute to the active site.

Belongs to the PEPCase type 1 family. It depends on Mg(2+) as a cofactor.

The catalysed reaction is oxaloacetate + phosphate = phosphoenolpyruvate + hydrogencarbonate. In terms of biological role, forms oxaloacetate, a four-carbon dicarboxylic acid source for the tricarboxylic acid cycle. This is Phosphoenolpyruvate carboxylase from Lactobacillus delbrueckii subsp. bulgaricus (strain ATCC 11842 / DSM 20081 / BCRC 10696 / JCM 1002 / NBRC 13953 / NCIMB 11778 / NCTC 12712 / WDCM 00102 / Lb 14).